A 239-amino-acid polypeptide reads, in one-letter code: Purine nucleoside phosphorylase DeoD-type (239 aa).

His5 is a binding site for a purine D-ribonucleoside. Residues Gly21, Arg25, Arg44, and 88–91 each bind phosphate; that span reads RVGS. A purine D-ribonucleoside is bound by residues 180–182 and 204–205; these read EME and SD. Asp205 functions as the Proton donor in the catalytic mechanism.

The protein belongs to the PNP/UDP phosphorylase family. As to quaternary structure, homohexamer; trimer of homodimers.

It carries out the reaction a purine D-ribonucleoside + phosphate = a purine nucleobase + alpha-D-ribose 1-phosphate. It catalyses the reaction a purine 2'-deoxy-D-ribonucleoside + phosphate = a purine nucleobase + 2-deoxy-alpha-D-ribose 1-phosphate. Catalyzes the reversible phosphorolytic breakdown of the N-glycosidic bond in the beta-(deoxy)ribonucleoside molecules, with the formation of the corresponding free purine bases and pentose-1-phosphate. The polypeptide is Purine nucleoside phosphorylase DeoD-type (Erwinia tasmaniensis (strain DSM 17950 / CFBP 7177 / CIP 109463 / NCPPB 4357 / Et1/99)).